The following is a 77-amino-acid chain: Acyl carrier protein (77 aa).

The Carrier domain occupies 2–77 (SNIEERVKKI…AAIDYVTANQ (76 aa)). Ser-37 carries the O-(pantetheine 4'-phosphoryl)serine modification.

This sequence belongs to the acyl carrier protein (ACP) family. 4'-phosphopantetheine is transferred from CoA to a specific serine of apo-ACP by AcpS. This modification is essential for activity because fatty acids are bound in thioester linkage to the sulfhydryl of the prosthetic group.

It is found in the cytoplasm. It functions in the pathway lipid metabolism; fatty acid biosynthesis. Its function is as follows. Carrier of the growing fatty acid chain in fatty acid biosynthesis. The sequence is that of Acyl carrier protein from Colwellia psychrerythraea (strain 34H / ATCC BAA-681) (Vibrio psychroerythus).